A 338-amino-acid chain; its full sequence is Tetraacyldisaccharide 4'-kinase (338 aa).

Residue Thr-63 to Thr-70 participates in ATP binding.

This sequence belongs to the LpxK family.

It carries out the reaction a lipid A disaccharide + ATP = a lipid IVA + ADP + H(+). Its pathway is glycolipid biosynthesis; lipid IV(A) biosynthesis; lipid IV(A) from (3R)-3-hydroxytetradecanoyl-[acyl-carrier-protein] and UDP-N-acetyl-alpha-D-glucosamine: step 6/6. In terms of biological role, transfers the gamma-phosphate of ATP to the 4'-position of a tetraacyldisaccharide 1-phosphate intermediate (termed DS-1-P) to form tetraacyldisaccharide 1,4'-bis-phosphate (lipid IVA). This Shewanella loihica (strain ATCC BAA-1088 / PV-4) protein is Tetraacyldisaccharide 4'-kinase.